We begin with the raw amino-acid sequence, 663 residues long: Transforming growth factor beta activator LRRC32 (663 aa).

The first 17 residues, 1–17 (MSHQILLLLAMLTLGLA), serve as a signal peptide directing secretion. Topologically, residues 18–628 (ISQRREQVPC…CEKGGLKNVN (611 aa)) are extracellular. The 28-residue stretch at 22-49 (REQVPCRTVNKEALCHGLGLLQVPSVLS) folds into the LRRNT domain. 10 LRR repeats span residues 49–72 (SLDI…PLGF), 73–96 (YTAL…VFQA), 98–123 (PYLE…GLGR), 125–148 (PLLV…LLGE), 149–172 (TPRL…TFWG), 174–196 (PAVE…AFEA), 197–220 (LPHL…SLQQ), 222–241 (QVLD…PEPQ), 243–267 (QFQL…VFPR), and 269–287 (IYLN…LPRG). Asparagine 204 carries N-linked (GlcNAc...) asparagine glycosylation. N-linked (GlcNAc...) asparagine glycosylation is found at asparagine 272, asparagine 305, and asparagine 309. A disordered region spans residues 291–311 (LHAPSEGWSASPLSNPSRNAS). Residues 301–311 (SPLSNPSRNAS) show a composition bias toward polar residues. 11 LRR repeats span residues 315 to 338 (LSQL…FLEH), 340 to 362 (TSLR…QVDS), 363 to 386 (LPCL…TKVL), 387 to 409 (GSLQ…TFAS), 411 to 433 (ASLQ…AEPG), 443 to 466 (IPTL…SFLH), 468 to 489 (PLTE…ALVG), 491 to 514 (EASL…LPCF), 515 to 539 (LRLK…AVSL), 541 to 559 (VLDL…AMGG), and 561 to 584 (ETSL…WLAA). The N-linked (GlcNAc...) asparagine glycan is linked to asparagine 346. N-linked (GlcNAc...) asparagine glycosylation is present at asparagine 546. Residues 572 to 621 (NPLSCCGNGWLAAQLHQGRVDVDATQDLICRFGSQEELSLSLVRPEDCEK) enclose the LRRCT domain. A helical membrane pass occupies residues 629–649 (LILLLSFTLVSAIVLTTLATI). The Cytoplasmic portion of the chain corresponds to 650-663 (CFLRRQKLSQQYKA).

Belongs to the LRRC32/LRRC33 family. In terms of assembly, interacts with TGFB1; associates via disulfide bonds with the Latency-associated peptide chain (LAP) regulatory chain of TGFB1, leading to regulate activation of TGF-beta-1. Interacts with TGFB2. Interacts with TGFB3; associates via disulfide bonds with the Latency-associated peptide chain (LAP) regulatory chain of TGFB3, leading to regulate activation of TGF-beta-3. Interacts with LAPTM4B; decreases TGFB1 production in regulatory T-cells. Present in medial edge epithelial cells at 14.5 dpc (at protein level).

It localises to the cell membrane. Its subcellular location is the cell surface. Key regulator of transforming growth factor beta (TGFB1, TGFB2 and TGFB3) that controls TGF-beta activation by maintaining it in a latent state during storage in extracellular space. Associates specifically via disulfide bonds with the Latency-associated peptide (LAP), which is the regulatory chain of TGF-beta, and regulates integrin-dependent activation of TGF-beta. Able to outcompete LTBP1 for binding to LAP regulatory chain of TGF-beta. Controls activation of TGF-beta-1 (TGFB1) on the surface of activated regulatory T-cells (Tregs). Required for epithelial fusion during palate development by regulating activation of TGF-beta-3 (TGFB3). This Mus musculus (Mouse) protein is Transforming growth factor beta activator LRRC32.